Reading from the N-terminus, the 417-residue chain is Gamma-glutamyl phosphate reductase (417 aa).

This sequence belongs to the gamma-glutamyl phosphate reductase family.

The protein localises to the cytoplasm. It carries out the reaction L-glutamate 5-semialdehyde + phosphate + NADP(+) = L-glutamyl 5-phosphate + NADPH + H(+). The protein operates within amino-acid biosynthesis; L-proline biosynthesis; L-glutamate 5-semialdehyde from L-glutamate: step 2/2. Functionally, catalyzes the NADPH-dependent reduction of L-glutamate 5-phosphate into L-glutamate 5-semialdehyde and phosphate. The product spontaneously undergoes cyclization to form 1-pyrroline-5-carboxylate. In Haemophilus influenzae (strain ATCC 51907 / DSM 11121 / KW20 / Rd), this protein is Gamma-glutamyl phosphate reductase.